The primary structure comprises 274 residues: Glutamate racemase (274 aa).

Residues 9–10 (DS) and 41–42 (YG) contribute to the substrate site. The active-site Proton donor/acceptor is the C72. Residue 73–74 (NT) participates in substrate binding. Catalysis depends on C184, which acts as the Proton donor/acceptor. 185-186 (TH) contributes to the substrate binding site.

It belongs to the aspartate/glutamate racemases family.

The catalysed reaction is L-glutamate = D-glutamate. It functions in the pathway cell wall biogenesis; peptidoglycan biosynthesis. Provides the (R)-glutamate required for cell wall biosynthesis. The sequence is that of Glutamate racemase from Oceanobacillus iheyensis (strain DSM 14371 / CIP 107618 / JCM 11309 / KCTC 3954 / HTE831).